We begin with the raw amino-acid sequence, 576 residues long: Gamma-aminobutyric acid receptor subunit beta (576 aa).

The N-terminal stretch at 1–29 is a signal peptide; it reads MSDSMLYQTLQTCLPKSRLITLWLAFTLA. Over 30–268 the chain is Extracellular; sequence MLIQEPRRHA…IQFVRSMGYY (239 aa). A glycan (N-linked (GlcNAc...) asparagine) is linked at Asn56. Residues Cys183 and Cys197 are joined by a disulfide bond. An N-linked (GlcNAc...) asparagine glycan is attached at Asn251. 3 helical membrane-spanning segments follow: residues 269 to 289, 298 to 320, and 330 to 350; these read LIQIYIPSGLIVVISWVSFWL, VALGVTTVLTMTTLMSSTNAALP, and VYLGTCFVMVFASLLEYATVG. Topologically, residues 351 to 540 are cytoplasmic; it reads YMAKRIQMRK…TPSDIDKYSR (190 aa). Disordered stretches follow at residues 372 to 418 and 452 to 507; these read QKKQ…QTVS and HDPK…GDAE. The span at 398-412 shows a compositional bias: basic residues; it reads HGHGHGHHSHGHPHV. The segment covering 475–490 has biased composition (pro residues); that stretch reads PVGPHGPGPQGPPGGP. Residues 491 to 501 are compositionally biased toward gly residues; sequence PAGGGGGGAPP. A helical transmembrane segment spans residues 541 to 561; that stretch reads IVFPVCFVCFNLMYWIIYLHV.

The protein belongs to the ligand-gated ion channel (TC 1.A.9) family. Gamma-aminobutyric acid receptor (TC 1.A.9.5) subfamily. Homomultimer.

The protein localises to the postsynaptic cell membrane. It is found in the cell membrane. Functionally, GABA, an inhibitory neurotransmitter, mediates neuronal inhibition by binding to the GABA receptor and opening an integral chloride channel. The sequence is that of Gamma-aminobutyric acid receptor subunit beta from Musca domestica (House fly).